Here is a 315-residue protein sequence, read N- to C-terminus: Methionyl-tRNA formyltransferase (315 aa).

The N-terminal domain stretch occupies residues 2-189 (SESLRIIFAG…LITTLKQLAD (188 aa)). Residue 113–116 (SLLP) coordinates (6S)-5,6,7,8-tetrahydrofolate. The interval 210–315 (KEEARIDWSL…EWFVPGNRLA (106 aa)) is C-terminal domain.

Belongs to the Fmt family.

It carries out the reaction L-methionyl-tRNA(fMet) + (6R)-10-formyltetrahydrofolate = N-formyl-L-methionyl-tRNA(fMet) + (6S)-5,6,7,8-tetrahydrofolate + H(+). Its function is as follows. Attaches a formyl group to the free amino group of methionyl-tRNA(fMet). The formyl group appears to play a dual role in the initiator identity of N-formylmethionyl-tRNA by promoting its recognition by IF2 and preventing the misappropriation of this tRNA by the elongation apparatus. This is Methionyl-tRNA formyltransferase from Escherichia coli O6:H1 (strain CFT073 / ATCC 700928 / UPEC).